Consider the following 242-residue polypeptide: MPKPTARRLNWFRVITAVIMAVLCIAILYQLWMFSLVVWYAYRDPGSSAIMRQELARLRERDPEAELKYQWVPYDRISNTLKQAVVASEDANFTEHDGVEWDAIRKAWEYNQRQAERGRTKMRGGSTITQQLAKNLFLSGSRSYLRKGQELVLAYMIEHVMPKERILELYLNVAEWGVGVFGAEAAARHYYNTSAARLGAGQAARLAAMLPNPRYYDRHRNTGYLNSRTATLTRRMRMVEIP.

Residues valine 18–valine 38 traverse the membrane as a helical segment.

Belongs to the glycosyltransferase 51 family.

It localises to the cell inner membrane. The enzyme catalyses [GlcNAc-(1-&gt;4)-Mur2Ac(oyl-L-Ala-gamma-D-Glu-L-Lys-D-Ala-D-Ala)](n)-di-trans,octa-cis-undecaprenyl diphosphate + beta-D-GlcNAc-(1-&gt;4)-Mur2Ac(oyl-L-Ala-gamma-D-Glu-L-Lys-D-Ala-D-Ala)-di-trans,octa-cis-undecaprenyl diphosphate = [GlcNAc-(1-&gt;4)-Mur2Ac(oyl-L-Ala-gamma-D-Glu-L-Lys-D-Ala-D-Ala)](n+1)-di-trans,octa-cis-undecaprenyl diphosphate + di-trans,octa-cis-undecaprenyl diphosphate + H(+). It participates in cell wall biogenesis; peptidoglycan biosynthesis. Peptidoglycan polymerase that catalyzes glycan chain elongation from lipid-linked precursors. The chain is Biosynthetic peptidoglycan transglycosylase from Bordetella bronchiseptica (strain ATCC BAA-588 / NCTC 13252 / RB50) (Alcaligenes bronchisepticus).